Here is a 356-residue protein sequence, read N- to C-terminus: ADP-ribosylhydrolase ARH3 (356 aa).

Mg(2+)-binding residues include D26, E33, T62, D63, and D64. D63 contacts substrate. Residues 132–138, H168, and I260 each bind substrate; that span reads KGSYGNG. The Mg(2+) site is built by D303, D305, and T306.

Belongs to the ADP-ribosylglycohydrolase family. As to quaternary structure, monomer. Requires Mg(2+) as cofactor. It depends on Mn(2+) as a cofactor.

Its subcellular location is the nucleus. It localises to the cytoplasm. The protein resides in the chromosome. It is found in the mitochondrion matrix. The enzyme catalyses [(1''-&gt;2')-ADP-alpha-D-ribose](n) + H2O = [(1''-&gt;2')-ADP-alpha-D-ribose](n-1) + ADP-D-ribose. The catalysed reaction is 1''-O-acetyl-ADP-alpha-D-ribose + H2O = ADP-D-ribose + acetate + H(+). It carries out the reaction O-(ADP-D-ribosyl)-L-seryl-[protein] + H2O = ADP-D-ribose + L-seryl-[protein]. It catalyses the reaction alpha-NAD(+) + H2O = ADP-D-ribose + nicotinamide + H(+). Its activity is regulated as follows. The protein undergoes a dramatic conformational switch from closed to open states upon substrate-binding, which enables specific substrate recognition for the 1''-O-linkage. The glutamate flap (Glu-33) blocks substrate entrance to Mg(2+) in the unliganded closed state. In presence of substrate, Glu-33 is ejected from the active site: this closed-to-open transition significantly widens the substrate-binding channel and precisely positions the scissile 1''-O-linkage for cleavage while securing tightly 2'- and 3'-hydroxyls of ADP-ribose. Activity is inhibited by calcium. Functionally, ADP-ribosylhydrolase that preferentially hydrolyzes the scissile alpha-O-linkage attached to the anomeric C1'' position of ADP-ribose and acts on different substrates, such as proteins ADP-ribosylated on serine and threonine, free poly(ADP-ribose) and O-acetyl-ADP-D-ribose. Specifically acts as a serine mono-ADP-ribosylhydrolase by mediating the removal of mono-ADP-ribose attached to serine residues on proteins, thereby playing a key role in DNA damage response. Serine ADP-ribosylation of proteins constitutes the primary form of ADP-ribosylation of proteins in response to DNA damage. Does not hydrolyze ADP-ribosyl-arginine, -cysteine, -diphthamide, or -asparagine bonds. Also able to degrade protein free poly(ADP-ribose), which is synthesized in response to DNA damage: free poly(ADP-ribose) acts as a potent cell death signal and its degradation by ADPRHL2 protects cells from poly(ADP-ribose)-dependent cell death, a process named parthanatos. Also hydrolyzes free poly(ADP-ribose) in mitochondria. Specifically digests O-acetyl-ADP-D-ribose, a product of deacetylation reactions catalyzed by sirtuins. Specifically degrades 1''-O-acetyl-ADP-D-ribose isomer, rather than 2''-O-acetyl-ADP-D-ribose or 3''-O-acetyl-ADP-D-ribose isomers. This is ADP-ribosylhydrolase ARH3 (adprs) from Latimeria chalumnae (Coelacanth).